The primary structure comprises 474 residues: Probable protein phosphatase 2C 37 (474 aa).

Positions 1–90 are disordered; sequence MVMASAGVNM…RDDDGCSSTA (90 aa). Positions 57–77 are enriched in low complexity; it reads LPASSASPSPSPTSSAASSDC. The PPM-type phosphatase domain maps to 113 to 470; that stretch reads AFGSVSLAGR…DNISVVVIDL (358 aa). Mn(2+)-binding residues include aspartate 152, glycine 153, and aspartate 387. Residues 406–434 form a disordered region; that stretch reads LEDGSPTSGRRAARSGEAASSSAGAPAAA. Residues 420 to 434 show a composition bias toward low complexity; it reads SGEAASSSAGAPAAA. Aspartate 461 serves as a coordination point for Mn(2+).

The protein belongs to the PP2C family. Requires Mg(2+) as cofactor. It depends on Mn(2+) as a cofactor.

The enzyme catalyses O-phospho-L-seryl-[protein] + H2O = L-seryl-[protein] + phosphate. The catalysed reaction is O-phospho-L-threonyl-[protein] + H2O = L-threonyl-[protein] + phosphate. The sequence is that of Probable protein phosphatase 2C 37 from Oryza sativa subsp. japonica (Rice).